We begin with the raw amino-acid sequence, 611 residues long: Homeobox protein BEL1 homolog (611 aa).

Disordered regions lie at residues 63–87 (QIRMTSGSDHHHHHHQTSGGTDQNQ), 101–133 (VNNDFPSEVNDERPPQRPSQGLSLSLSSSNPTS), 141–160 (LRPQQQQQQGYSGNKSTQHQ), and 174–195 (SHHQNNNNNNHQHHNHHQFQIG). A compositionally biased stretch (low complexity) spans 118 to 133 (PSQGLSLSLSSSNPTS). The segment covering 174 to 183 (SHHQNNNNNN) has biased composition (low complexity). Residues 197–213 (SKYLSPAQELLSEFCSL) are SR/KY domain. Residues 225-263 (MKHKKKQKGKQQEEWDTSHHSNNDQHDQSATTSSKKHVP) are disordered. The segment covering 234-251 (KQQEEWDTSHHSNNDQHD) has biased composition (basic and acidic residues). Residues 269-340 (EFMELQKRKA…CLKDGLVGQI (72 aa)) form a BELL domain region. The Bipartite nuclear localization motif lies at 275–290 (KRKAKLLSMLEELKRR). A DNA-binding region (homeobox) is located at residues 391–453 (PWRPQRGLPE…NARVRLWKPM (63 aa)).

It belongs to the TALE/BELL homeobox family. As to quaternary structure, may form heterodimeric complexes with TALE/KNOX proteins STM, KNAT1/BP, KNAT2 and KNAT5. Interacts with AG-SEP1 and AG-SEP3 dimers. Interacts with KNATM, isoform KNATM-B. Interacts with BZIP30. Expressed in both floral and vegetative tissues.

The protein resides in the nucleus. In terms of biological role, plays a major role in ovule patterning and in determination of integument identity via its interaction with MADS-box factors. Formation of complex with AG-SEP dimers negatively regulates the carpel identity process and favors the maintenance of ovule identity. BEL1-STM complex maintains the indeterminacy of the inflorescence meristem. Required, with SPL, for cytokinin-induced PIN1 expression in ovules. In Arabidopsis thaliana (Mouse-ear cress), this protein is Homeobox protein BEL1 homolog (BEL1).